Here is a 64-residue protein sequence, read N- to C-terminus: Large ribosomal subunit protein bL35c (64 aa).

This sequence belongs to the bacterial ribosomal protein bL35 family.

It localises to the plastid. The protein localises to the chloroplast. The protein is Large ribosomal subunit protein bL35c of Trieres chinensis (Marine centric diatom).